The sequence spans 333 residues: Protoheme IX farnesyltransferase (333 aa).

7 helical membrane-spanning segments follow: residues 63-83, 109-129, 132-152, 160-180, 188-208, 245-265, and 292-312; these read LACT…LNCI, AAFI…VSGV, LAAG…TAIL, IVIG…AASG, WLFA…ALLL, GFGV…LIPF, and WSIF…LPMA.

Belongs to the UbiA prenyltransferase family. Protoheme IX farnesyltransferase subfamily.

It is found in the cell inner membrane. The catalysed reaction is heme b + (2E,6E)-farnesyl diphosphate + H2O = Fe(II)-heme o + diphosphate. It functions in the pathway porphyrin-containing compound metabolism; heme O biosynthesis; heme O from protoheme: step 1/1. Its function is as follows. Converts heme B (protoheme IX) to heme O by substitution of the vinyl group on carbon 2 of heme B porphyrin ring with a hydroxyethyl farnesyl side group. The chain is Protoheme IX farnesyltransferase from Prochlorococcus marinus (strain MIT 9303).